The following is a 385-amino-acid chain: Multidrug resistance protein MdtE (385 aa).

Residues 1 to 20 (MNRRRKLLIPLLFCGAMLTA) form the signal peptide. Cys21 carries N-palmitoyl cysteine lipidation. A lipid anchor (S-diacylglycerol cysteine) is attached at Cys21.

It belongs to the membrane fusion protein (MFP) (TC 8.A.1) family. As to quaternary structure, homotrimer. Part of the tripartite efflux system MdtEF-TolC, which is composed of an inner membrane transporter, MdtF, a membrane fusion protein, MdtE, and an outer membrane component, TolC. The complex forms a large protein conduit and can translocate molecules across both the inner and outer membranes.

It localises to the cell inner membrane. Functionally, part of the tripartite efflux system MdtEF-TolC, which confers resistance to compounds such as rhodamine 6G, erythromycin, doxorubicin, ethidium bromide, TPP, SDS, deoxycholate, crystal violet and benzalkonium. The polypeptide is Multidrug resistance protein MdtE (mdtE) (Escherichia coli (strain K12)).